The following is a 575-amino-acid chain: Flagellin B (575 aa).

The protein belongs to the bacterial flagellin family. As to quaternary structure, heteromer of flaA and flaB.

Its subcellular location is the secreted. It localises to the bacterial flagellum. Its function is as follows. Flagellin is the subunit protein which polymerizes to form the filaments of bacterial flagella. In Campylobacter jejuni, this protein is Flagellin B (flaB).